A 2359-amino-acid chain; its full sequence is MTEGTLAADEVRVPLGASPPAPAAPVRASPASPGAPGREEQGGSGSGVLAPESPGTECGADLGADEEQPVPYPALAATVFFCLGQTTRPRSWCLRLVCNPWFEHISMLVIMLNCVTLGMFRPCEDVECRSERCSILEAFDDFIFAFFAVEMVIKMVALGLFGQKCYLGDTWNRLDFFIVMAGMMEYSLDGHNVSLSAIRTVRVLRPLRAINRVPSMRILVTLLLDTLPMLGNVLLLCFFVFFIFGIVGVQLWAGLLRNRCFLDSAFVRNNNLTFLRPYYQTEEGEENPFICSSRRDNGMQKCSHIPSRRELRVQCTLGWEAYGQPQAEDGGAGRNACINWNQYYNVCRSGEFNPHNGAINFDNIGYAWIAIFQVITLEGWVDIMYYVMDAHSFYNFIYFILLIIMGSFFMINLCLVVIATQFSETKQRENQLMREQRARYLSNDSTLASFSEPGSCYEELLKYVGHIFRKVKRRSLRLYARWQSRWRKKVDPSSTVHGQGPGRRPRRAGRRTASVHHLVYHHHHHHHHHYHFSHGGPRRPSPEPGAGDNRLVRACAPPSPPSPGHGPPDSESVHSIYHADCHVEGPQERARVAHSIATAASLKLASGLGTMNYPTILPSGTVNSKGGTSSRPKGLRGAGAPGAAVHSPLSLGSPRPYEKIQDVVGEQGLGRASSHLSGLSVPCPLPSPQAGTLTCELKSCPYCASALEDPEFEFSGSESGDSDAHGVYEFTQDVRHGDCRDPVQQPHEVGTPGHSNERRRTPLRKASQPGGIGHLWASFSGKLRRIVDSKYFNRGIMAAILVNTLSMGVEYHEQPEELTNALEISNIVFTSMFALEMLLKLLACGPLGYIRNPYNIFDGIVVVISVWEIVGQANGGLSVLRTFRLLRVLKLVRFLPALRRQLVVLMRTMDNVATFCMLLMLFIFIFSILGMHLFGCKFSLKTDSGDTVPDRKNFDSLLWAIVTVFQILTQEDWNVVLYNGMASTSSWAALYFVALMTFGNYVLFNLLVAILVEGFQAEGDATRSDTDEDKTSTQLEGDFDKLRDLRATEMKMYSLAVTPNGHLEGRGSLPPPLITHTAATPMPTPKSSPNLDVAHALLDSRRSSSGSVDPQLGDQKSLASLRSSPCTPWGPNSAGSSRRSSWNSLGRAPSLKRRNQCGERESLLSGEGKGSTDDEAEDSRPSTGTHPGASPGPRATPLRRAESLDHRSTLDLCPPRPAALLPTKFHDCNGQMVALPSEFFLRIDSHKEDAAEFDDDIEDSCCFRLHKVLEPYAPQWCRSRESWALYLFPPQNRLRVSCQKVIAHKMFDHVVLVFIFLNCITIALERPDIDPGSTERAFLSVSNYIFTAIFVVEMMVKVVALGLLWGEHAYLQSSWNVLDGLLVLVSLVDIIVAMASAGGAKILGVLRVLRLLRTLRPLRVISRAPGLKLVVETLISSLRPIGNIVLICCAFFIIFGILGVQLFKGKFYYCEGTDTRNITTKAECHAAHYRWVRRKYNFDNLGQALMSLFVLSSKDGWVNIMYDGLDAVGIDQQPVQNHNPWMLLYFISFLLIVSFFVLNMFVGVVVENFHKCRQHQEAEEARRREEKRLRRLERRRRKAQRRPYYADYSHTRRSIHSLCTSHYLDLFITFIICLNVITMSMEHYNQPKSLDEALKYCNYVFTIVFVFEAALKLVAFGFRRFFKDRWNQLDLAIVLLSIMGIALEEIEMNAALPINPTIIRIMRVLRIARVLKLLKMATGMRALLDTVVQALPQVGNLGLLFMLLFFIYAALGVELFGRLECSEDNPCEGLSRHATFTNFGMAFLTLFRVSTGDNWNGIMKDTLRECTREDKHCLSYLPALSPVYFVTFMLVAQFVLVNVVVAVLMKHLEESNKEAREDAEMDAEIELEMAQGSTAQPPPTAQESQGTQPDTPNLLVVRKVSVSRMLSLPNDSYMFRPVAPAAAPHSHPLQEVEMETYTGPVTSAHSPPLEPRASFQVPSAASSPARVSDPLCALSPRGTPRSLSLSRILCRQEAMHSESLEGKVDDVGGDSIPDYTEPAENMSTSQASTGAPRSPPCSPRPASVRTRKHTFGQRCISSRPPTLGGDEAEAADPADEEVSHITSSAHPWPATEPHSPEASPTASPVKGTMGSGRDPRRFCSVDAQSFLDKPGRPDAQRWSSVELDNGESHLESGEVRGRASELEPALGSRRKKKMSPPCISIEPPTKDEGSSRPPAAEGGNTTLRRRTPSCEAALHRDCPEPTEGPGTGGDPVAKGERWGQASCRAEHLTVPNFAFEPLDMGGPGGDCFLDSDQSVTPEPRVSSLGAIVPLILETELSMPSGDCPEKEQGLYLTVPQTPLKKPGSTPATPAPDDSGDEPV.

The segment at 1–63 (MTEGTLAADE…PGTECGADLG (63 aa)) is disordered. Residues 1–100 (MTEGTLAADE…SWCLRLVCNP (100 aa)) are Cytoplasmic-facing. Over residues 24–36 (APVRASPASPGAP) the composition is skewed to low complexity. An I repeat occupies 87 to 422 (TRPRSWCLRL…LCLVVIATQF (336 aa)). The helical transmembrane segment at 101-119 (WFEHISMLVIMLNCVTLGM) threads the bilayer. The Extracellular segment spans residues 120-141 (FRPCEDVECRSERCSILEAFDD). D140 is a binding site for Zn(2+). Residues 142–160 (FIFAFFAVEMVIKMVALGL) traverse the membrane as a helical segment. Over 161-169 (FGQKCYLGD) the chain is Cytoplasmic. Residues 170–184 (TWNRLDFFIVMAGMM) form a helical membrane-spanning segment. The Extracellular portion of the chain corresponds to 185-193 (EYSLDGHNV). Positions 189 and 191 each coordinate Zn(2+). The N-linked (GlcNAc...) asparagine glycan is linked to N192. The helical transmembrane segment at 194-212 (SLSAIRTVRVLRPLRAINR) threads the bilayer. Residues 213-232 (VPSMRILVTLLLDTLPMLGN) lie on the Cytoplasmic side of the membrane. The helical transmembrane segment at 233 to 253 (VLLLCFFVFFIFGIVGVQLWA) threads the bilayer. Residues 254 to 394 (GLLRNRCFLD…YYVMDAHSFY (141 aa)) lie on the Extracellular side of the membrane. N-linked (GlcNAc...) asparagine glycosylation occurs at N271. Residues 395–419 (NFIYFILLIIMGSFFMINLCLVVIA) traverse the membrane as a helical segment. Residues 420 to 790 (TQFSETKQRE…GKLRRIVDSK (371 aa)) lie on the Cytoplasmic side of the membrane. Disordered regions lie at residues 490-573 (VDPS…SESV), 620-656 (GTVNSKGGTSSRPKGLRGAGAPGAAVHSPLSLGSPRP), and 737-769 (GDCRDPVQQPHEVGTPGHSNERRRTPLRKASQP). Residues 503-532 (RRPRRAGRRTASVHHLVYHHHHHHHHHYHF) show a composition bias toward basic residues. Residues 557–566 (PPSPPSPGHG) are compositionally biased toward pro residues. Residues 620–631 (GTVNSKGGTSSR) are compositionally biased toward polar residues. The stretch at 776-1015 (WASFSGKLRR…LLVAILVEGF (240 aa)) is one II repeat. The chain crosses the membrane as a helical span at residues 791-811 (YFNRGIMAAILVNTLSMGVEY). The Extracellular segment spans residues 812–824 (HEQPEELTNALEI). Residues 825–846 (SNIVFTSMFALEMLLKLLACGP) form a helical membrane-spanning segment. Residues 847-852 (LGYIRN) are Cytoplasmic-facing. A helical membrane pass occupies residues 853 to 871 (PYNIFDGIVVVISVWEIVG). At 872-879 (QANGGLSV) the chain is on the extracellular side. The chain crosses the membrane as a helical span at residues 880–903 (LRTFRLLRVLKLVRFLPALRRQLV). At 904–914 (VLMRTMDNVAT) the chain is on the cytoplasmic side. A helical membrane pass occupies residues 915-935 (FCMLLMLFIFIFSILGMHLFG). At 936-987 (CKFSLKTDSGDTVPDRKNFDSLLWAIVTVFQILTQEDWNVVLYNGMASTSSW) the chain is on the extracellular side. Residues 988–1012 (AALYFVALMTFGNYVLFNLLVAILV) form a helical membrane-spanning segment. Over 1013–1301 (EGFQAEGDAT…NRLRVSCQKV (289 aa)) the chain is Cytoplasmic. The segment at 1061-1197 (GHLEGRGSLP…GASPGPRATP (137 aa)) is disordered. Residues 1117 to 1126 (SLASLRSSPC) are compositionally biased toward polar residues. Positions 1130 to 1147 (GPNSAGSSRRSSWNSLGR) are enriched in low complexity. One copy of the III repeat lies at 1292-1569 (NRLRVSCQKV…MFVGVVVENF (278 aa)). A helical membrane pass occupies residues 1302 to 1324 (IAHKMFDHVVLVFIFLNCITIAL). Residues 1325-1342 (ERPDIDPGSTERAFLSVS) are Extracellular-facing. A helical transmembrane segment spans residues 1343-1363 (NYIFTAIFVVEMMVKVVALGL). The Cytoplasmic portion of the chain corresponds to 1364-1373 (LWGEHAYLQS). The helical transmembrane segment at 1374–1393 (SWNVLDGLLVLVSLVDIIVA) threads the bilayer. Topologically, residues 1394-1407 (MASAGGAKILGVLR) are extracellular. A helical membrane pass occupies residues 1408 to 1429 (VLRLLRTLRPLRVISRAPGLKL). Over 1430 to 1439 (VVETLISSLR) the chain is Cytoplasmic. Residues 1440–1463 (PIGNIVLICCAFFIIFGILGVQLF) form a helical membrane-spanning segment. The Extracellular portion of the chain corresponds to 1464-1540 (KGKFYYCEGT…DQQPVQNHNP (77 aa)). N-linked (GlcNAc...) asparagine glycosylation occurs at N1477. A helical transmembrane segment spans residues 1541–1566 (WMLLYFISFLLIVSFFVLNMFVGVVV). Over 1567–1621 (ENFHKCRQHQEAEEARRREEKRLRRLERRRRKAQRRPYYADYSHTRRSIHSLCTS) the chain is Cytoplasmic. The stretch at 1607 to 1868 (DYSHTRRSIH…VVVAVLMKHL (262 aa)) is one IV repeat. Residues 1622 to 1642 (HYLDLFITFIICLNVITMSME) form a helical membrane-spanning segment. Residues 1643–1656 (HYNQPKSLDEALKY) are Extracellular-facing. Residues 1657-1678 (CNYVFTIVFVFEAALKLVAFGF) form a helical membrane-spanning segment. Residues 1679–1685 (RRFFKDR) are Cytoplasmic-facing. The chain crosses the membrane as a helical span at residues 1686 to 1704 (WNQLDLAIVLLSIMGIALE). At 1705–1718 (EIEMNAALPINPTI) the chain is on the extracellular side. The chain crosses the membrane as a helical span at residues 1719 to 1742 (IRIMRVLRIARVLKLLKMATGMRA). Residues 1743-1756 (LLDTVVQALPQVGN) lie on the Cytoplasmic side of the membrane. The helical transmembrane segment at 1757 to 1777 (LGLLFMLLFFIYAALGVELFG) threads the bilayer. The Extracellular segment spans residues 1778–1840 (RLECSEDNPC…KHCLSYLPAL (63 aa)). Residues 1841-1868 (SPVYFVTFMLVAQFVLVNVVVAVLMKHL) traverse the membrane as a helical segment. The Cytoplasmic segment spans residues 1869 to 2359 (EESNKEARED…APDDSGDEPV (491 aa)). Over residues 1891 to 1911 (QGSTAQPPPTAQESQGTQPDT) the composition is skewed to polar residues. Disordered regions lie at residues 1891–1913 (QGSTAQPPPTAQESQGTQPDTPN), 1974–2003 (SFQVPSAASSPARVSDPLCALSPRGTPRSL), 2016–2258 (HSES…GERW), and 2335–2359 (PQTPLKKPGSTPATPAPDDSGDEPV). Over residues 2016-2026 (HSESLEGKVDD) the composition is skewed to basic and acidic residues. Positions 2086–2096 (DEAEAADPADE) are enriched in acidic residues. Positions 2166–2181 (GESHLESGEVRGRASE) are enriched in basic and acidic residues.

Belongs to the calcium channel alpha-1 subunit (TC 1.A.1.11) family. CACNA1H subfamily. Interacts (via N-terminal cytoplasmic domain) with STAC. In response to raising of intracellular calcium, the T-type channels are activated by CaM-kinase II. As to expression, expressed in brain.

The protein resides in the cell membrane. The catalysed reaction is Ca(2+)(in) = Ca(2+)(out). Functionally, voltage-sensitive calcium channel that gives rise to T-type calcium currents. T-type calcium channels belong to the 'low-voltage activated (LVA)' group. A particularity of this type of channel is an opening at quite negative potentials, and a voltage-dependent inactivation. T-type channels serve pacemaking functions in both central neurons and cardiac nodal cells and support calcium signaling in secretory cells and vascular smooth muscle. They may also be involved in the modulation of firing patterns of neurons. In the adrenal zona glomerulosa, participates in the signaling pathway leading to aldosterone production in response to either AGT/angiotensin II, or hyperkalemia. The chain is Voltage-dependent T-type calcium channel subunit alpha-1H (Cacna1h) from Rattus norvegicus (Rat).